Reading from the N-terminus, the 350-residue chain is Melatonin receptor type 1A-A (350 aa).

The Extracellular segment spans residues 1–29 (MFMNGSSLNSSALDPSEQALQRPPWVTTT). Asparagine 4 and asparagine 9 each carry an N-linked (GlcNAc...) asparagine glycan. Residues 30-50 (LGCFLIFTIVVDILGNLLVIF) form a helical membrane-spanning segment. Topologically, residues 51-63 (SVYRNKKLQNAGN) are cytoplasmic. A helical membrane pass occupies residues 64-84 (IFVVSLAVADLVVAIYPYPLV). At 85–101 (LTSIFHRGWNLGYMHCQ) the chain is on the extracellular side. The cysteines at positions 100 and 177 are disulfide-linked. Residues 102–122 (ISGFLMGVSVIGSIFNITGIA) form a helical membrane-spanning segment. Over 123–144 (INCYCYICHSLKYDKLYSDKNS) the chain is Cytoplasmic. The chain crosses the membrane as a helical span at residues 145-165 (VCYVLLIWALTVLAIVPNLFV). The Extracellular portion of the chain corresponds to 166-187 (GSLQYDPRVYSCTFEQSASSAY). Residues 188–208 (TIAVVFFHFILPIMIVTYCYL) traverse the membrane as a helical segment. Residues 209-240 (RIWVLVIQVRRRVKNDNRPKITPHDVRNFVTM) are Cytoplasmic-facing. Residues 241-261 (FVVFVLFAVCWAPLNFIGLAV) form a helical membrane-spanning segment. The Extracellular segment spans residues 262–267 (AISPER). A helical membrane pass occupies residues 268–288 (VVPLIPEWLFVASYFMAYFNS). Residues 289 to 350 (CLNAIVYGVL…NNNQVKVDSV (62 aa)) are Cytoplasmic-facing.

This sequence belongs to the G-protein coupled receptor 1 family.

Its subcellular location is the cell membrane. Functionally, high affinity receptor for melatonin. The activity of this receptor is mediated by pertussis toxin sensitive G proteins that inhibits adenylate cyclase activity. The sequence is that of Melatonin receptor type 1A-A (mtnr1aa) from Danio rerio (Zebrafish).